Consider the following 755-residue polypeptide: Xaa-Pro dipeptidyl-peptidase (755 aa).

Residues Ser348, Asp468, and His498 each act as charge relay system in the active site.

The protein belongs to the peptidase S15 family. Homodimer.

The protein resides in the cytoplasm. The enzyme catalyses Hydrolyzes Xaa-Pro-|- bonds to release unblocked, N-terminal dipeptides from substrates including Ala-Pro-|-p-nitroanilide and (sequentially) Tyr-Pro-|-Phe-Pro-|-Gly-Pro-|-Ile.. In terms of biological role, removes N-terminal dipeptides sequentially from polypeptides having unsubstituted N-termini provided that the penultimate residue is proline. The polypeptide is Xaa-Pro dipeptidyl-peptidase (Streptococcus thermophilus).